A 492-amino-acid chain; its full sequence is Fibroblast growth factor receptor substrate 3 (492 aa).

G2 carries N-myristoyl glycine lipidation. One can recognise an IRS-type PTB domain in the interval 13-115; that stretch reads VPHNHPTKFK…QCNSINVTEE (103 aa). 3 disordered regions span residues 125–205, 337–413, and 425–492; these read PQEL…EDRR, QQLR…EPPR, and WGTA…DLPL. 2 stretches are compositionally biased toward polar residues: residues 133–147 and 166–185; these read GSSQ…SFSN and PSTS…QTLI. The segment covering 374–385 has biased composition (low complexity); the sequence is TSTRASARSHSS.

Binds NTRK1, FGFR1, NGFR, GRB2, PTPN11 and ERK2. In terms of processing, phosphorylated on tyrosine residues upon stimulation by BFGF or NGFB.

Its subcellular location is the membrane. Functionally, adapter protein that links FGF and NGF receptors to downstream signaling pathways. Involved in the activation of MAP kinases. Down-regulates ERK2 signaling by interfering with the phosphorylation and nuclear translocation of ERK2. The sequence is that of Fibroblast growth factor receptor substrate 3 (Frs3) from Rattus norvegicus (Rat).